Reading from the N-terminus, the 180-residue chain is Pro-glucagon (180 aa).

The N-terminal stretch at 1-20 is a signal peptide; sequence MKTVYIVAGLFVMLVQGSWQ. A disordered region spans residues 23 to 59; that stretch reads PQDTEENARSFPASQTEPLEDPDQINEDKRHSQGTFT. S54 carries the phosphoserine modification. A propeptide spanning residues 84 to 89 is cleaved from the precursor; it reads NRNNIA. S105 and S108 each carry phosphoserine. R127 carries the post-translational modification Arginine amide. Positions 131–145 are excised as a propeptide; the sequence is DFPEEVAIAEELGRR. 2 positions are modified to phosphoserine: S150 and S152.

Belongs to the glucagon family. Post-translationally, proglucagon is post-translationally processed in a tissue-specific manner in pancreatic A cells and intestinal L cells. In pancreatic A cells, the major bioactive hormone is glucagon cleaved by PCSK2/PC2. In the intestinal L cells PCSK1/PC1 liberates GLP-1, GLP-2, glicentin and oxyntomodulin. GLP-1 is further N-terminally truncated by post-translational processing in the intestinal L cells resulting in GLP-1(7-37) GLP-1-(7-36)amide. The C-terminal amidation is neither important for the metabolism of GLP-1 nor for its effects on the endocrine pancreas. Glucagon is secreted in the A cells of the islets of Langerhans. GLP-1, GLP-2, oxyntomodulin and glicentin are secreted from enteroendocrine cells throughout the gastrointestinal tract.

It localises to the secreted. Plays a key role in glucose metabolism and homeostasis. Regulates blood glucose by increasing gluconeogenesis and decreasing glycolysis. A counterregulatory hormone of insulin, raises plasma glucose levels in response to insulin-induced hypoglycemia. Plays an important role in initiating and maintaining hyperglycemic conditions in diabetes. Functionally, potent stimulator of glucose-dependent insulin release. Also stimulates insulin release in response to IL6. Plays important roles on gastric motility and the suppression of plasma glucagon levels. May be involved in the suppression of satiety and stimulation of glucose disposal in peripheral tissues, independent of the actions of insulin. Has growth-promoting activities on intestinal epithelium. May also regulate the hypothalamic pituitary axis (HPA) via effects on LH, TSH, CRH, oxytocin, and vasopressin secretion. Increases islet mass through stimulation of islet neogenesis and pancreatic beta cell proliferation. Inhibits beta cell apoptosis. Its function is as follows. Stimulates intestinal growth and up-regulates villus height in the small intestine, concomitant with increased crypt cell proliferation and decreased enterocyte apoptosis. The gastrointestinal tract, from the stomach to the colon is the principal target for GLP-2 action. Plays a key role in nutrient homeostasis, enhancing nutrient assimilation through enhanced gastrointestinal function, as well as increasing nutrient disposal. Stimulates intestinal glucose transport and decreases mucosal permeability. In terms of biological role, may modulate gastric acid secretion and the gastro-pyloro-duodenal activity. May play an important role in intestinal mucosal growth in the early period of life. Oxyntomodulin significantly reduces food intake. This is Pro-glucagon (Gcg) from Rattus norvegicus (Rat).